The primary structure comprises 515 residues: 2,3-bisphosphoglycerate-independent phosphoglycerate mutase (515 aa).

2 residues coordinate Mn(2+): Asp14 and Ser64. The Phosphoserine intermediate role is filled by Ser64. Substrate contacts are provided by residues His125, 155-156 (RD), Arg187, Arg193, 263-266 (RADR), and Lys337. Asp404, His408, Asp445, His446, and His464 together coordinate Mn(2+).

Belongs to the BPG-independent phosphoglycerate mutase family. As to quaternary structure, monomer. Requires Mn(2+) as cofactor.

The catalysed reaction is (2R)-2-phosphoglycerate = (2R)-3-phosphoglycerate. Its pathway is carbohydrate degradation; glycolysis; pyruvate from D-glyceraldehyde 3-phosphate: step 3/5. Functionally, catalyzes the interconversion of 2-phosphoglycerate and 3-phosphoglycerate. The protein is 2,3-bisphosphoglycerate-independent phosphoglycerate mutase of Yersinia pestis bv. Antiqua (strain Antiqua).